A 251-amino-acid polypeptide reads, in one-letter code: Probable ATP-dependent transporter ycf16 (251 aa).

The 243-residue stretch at 8-250 folds into the ABC transporter domain; that stretch reads LEIKNLKACI…ELESKGYEWL (243 aa). 40 to 47 contacts ATP; the sequence is GPNGSGKS.

This sequence belongs to the ABC transporter superfamily. Ycf16 family.

The protein resides in the plastid. Its subcellular location is the chloroplast. This is Probable ATP-dependent transporter ycf16 (ycf16) from Trieres chinensis (Marine centric diatom).